We begin with the raw amino-acid sequence, 134 residues long: Small ribosomal subunit protein uS8c (134 aa).

The protein belongs to the universal ribosomal protein uS8 family. In terms of assembly, part of the 30S ribosomal subunit.

Its subcellular location is the plastid. The protein localises to the chloroplast. Functionally, one of the primary rRNA binding proteins, it binds directly to 16S rRNA central domain where it helps coordinate assembly of the platform of the 30S subunit. In Panax ginseng (Korean ginseng), this protein is Small ribosomal subunit protein uS8c (rps8).